Reading from the N-terminus, the 86-residue chain is Putative membrane protein insertion efficiency factor (86 aa).

Belongs to the UPF0161 family.

It is found in the cell inner membrane. Functionally, could be involved in insertion of integral membrane proteins into the membrane. This Haemophilus influenzae (strain 86-028NP) protein is Putative membrane protein insertion efficiency factor.